The primary structure comprises 115 residues: Large ribosomal subunit protein bL19 (115 aa).

This sequence belongs to the bacterial ribosomal protein bL19 family.

Functionally, this protein is located at the 30S-50S ribosomal subunit interface and may play a role in the structure and function of the aminoacyl-tRNA binding site. The protein is Large ribosomal subunit protein bL19 of Thermosipho africanus (strain TCF52B).